Consider the following 152-residue polypeptide: Nucleoplasmin-like protein (152 aa).

The segment covering 109–128 (EVVDMEEDDEEDDVAEDEED) has biased composition (acidic residues). The segment at 109-152 (EVVDMEEDDEEDDVAEDEEDEHPKKRAKIENAADGKNAKNNKKK) is disordered. The span at 136 to 145 (KIENAADGKN) shows a compositional bias: basic and acidic residues.

This sequence belongs to the nucleoplasmin family. In terms of assembly, decamer formed by two pentameric rings associated in a head-to-head fashion.

Its subcellular location is the nucleus. In terms of biological role, binds to core histones and functions in the ATP-facilitated assembly of approximately regularly spaced nucleosomal arrays. May participate in parallel with other histone-binding proteins such as NAP-1. Inactive for chromatin assembly. In vitro it appears to form a high molecular mass aggregate with the core histones. The sequence is that of Nucleoplasmin-like protein (Nlp) from Drosophila melanogaster (Fruit fly).